The primary structure comprises 155 residues: SsrA-binding protein (155 aa).

The protein belongs to the SmpB family.

It localises to the cytoplasm. Functionally, required for rescue of stalled ribosomes mediated by trans-translation. Binds to transfer-messenger RNA (tmRNA), required for stable association of tmRNA with ribosomes. tmRNA and SmpB together mimic tRNA shape, replacing the anticodon stem-loop with SmpB. tmRNA is encoded by the ssrA gene; the 2 termini fold to resemble tRNA(Ala) and it encodes a 'tag peptide', a short internal open reading frame. During trans-translation Ala-aminoacylated tmRNA acts like a tRNA, entering the A-site of stalled ribosomes, displacing the stalled mRNA. The ribosome then switches to translate the ORF on the tmRNA; the nascent peptide is terminated with the 'tag peptide' encoded by the tmRNA and targeted for degradation. The ribosome is freed to recommence translation, which seems to be the essential function of trans-translation. This is SsrA-binding protein from Streptococcus pyogenes serotype M18 (strain MGAS8232).